A 314-amino-acid polypeptide reads, in one-letter code: MHAYLHCLSHSPLVGYVDPAQEVLDEVNGVIASARERIAAFSPELVVLFAPDHYNGFFYDVMPPFCLGVGATAIGDFGSAAGELPVPVELAEACAHAVMKSGIDLAVSYCMQVDHGFAQPLEFLLGGLDKVPVLPVFINGVATPLPGFQRTRMLGEAIGRFTSTLNKRVLFLGSGGLSHQPPVPELAKADAHMRDRLLGSGKDLPASERELRQQRVISAAEKFVEDQRTLHPLNPIWDNQFMTLLEQGRIQELDAVSNEELSAIAGKSTHEIKTWVAAFAAISAFGNWRSEGRYYRPIPEWIAGFGSLSARTEN.

The active-site Proton donor is the His115. The Proton acceptor role is filled by His179.

Belongs to the LigB/MhpB extradiol dioxygenase family. In terms of assembly, homotetramer. Fe(2+) is required as a cofactor.

It carries out the reaction 3-(2,3-dihydroxyphenyl)propanoate + O2 = (2Z,4E)-2-hydroxy-6-oxonona-2,4-dienedioate + H(+). It catalyses the reaction (2E)-3-(2,3-dihydroxyphenyl)prop-2-enoate + O2 = (2Z,4E,7E)-2-hydroxy-6-oxonona-2,4,7-trienedioate + H(+). The protein operates within aromatic compound metabolism; 3-phenylpropanoate degradation. Functionally, catalyzes the non-heme iron(II)-dependent oxidative cleavage of 2,3-dihydroxyphenylpropionic acid and 2,3-dihydroxicinnamic acid into 2-hydroxy-6-ketononadienedioate and 2-hydroxy-6-ketononatrienedioate, respectively. This Escherichia coli O157:H7 protein is 2,3-dihydroxyphenylpropionate/2,3-dihydroxicinnamic acid 1,2-dioxygenase.